The chain runs to 279 residues: Prephenate dehydratase (279 aa).

The Prephenate dehydratase domain maps to 2–178; sequence KIAYLGPRGS…NSTRFWLLGK (177 aa). Residues 194-272 form the ACT domain; sequence LALTLPDNLP…VNVRLLGNYS (79 aa).

The enzyme catalyses prephenate + H(+) = 3-phenylpyruvate + CO2 + H2O. Its pathway is amino-acid biosynthesis; L-phenylalanine biosynthesis; phenylpyruvate from prephenate: step 1/1. This chain is Prephenate dehydratase (pheA), found in Lactococcus lactis subsp. cremoris (strain MG1363).